A 288-amino-acid polypeptide reads, in one-letter code: Thymidylate synthase (288 aa).

A dUMP-binding site is contributed by R21. A (6R)-5,10-methylene-5,6,7,8-tetrahydrofolate-binding site is contributed by N51. R150–R151 contributes to the dUMP binding site. C170 acts as the Nucleophile in catalysis. DUMP contacts are provided by residues R190–D193, N201, and H231–Y233. Residue D193 participates in (6R)-5,10-methylene-5,6,7,8-tetrahydrofolate binding. (6R)-5,10-methylene-5,6,7,8-tetrahydrofolate is bound at residue A287.

Belongs to the thymidylate synthase family. Bacterial-type ThyA subfamily. As to quaternary structure, homodimer.

Its subcellular location is the cytoplasm. The enzyme catalyses dUMP + (6R)-5,10-methylene-5,6,7,8-tetrahydrofolate = 7,8-dihydrofolate + dTMP. It functions in the pathway pyrimidine metabolism; dTTP biosynthesis. Catalyzes the reductive methylation of 2'-deoxyuridine-5'-monophosphate (dUMP) to 2'-deoxythymidine-5'-monophosphate (dTMP) while utilizing 5,10-methylenetetrahydrofolate (mTHF) as the methyl donor and reductant in the reaction, yielding dihydrofolate (DHF) as a by-product. This enzymatic reaction provides an intracellular de novo source of dTMP, an essential precursor for DNA biosynthesis. This is Thymidylate synthase from Aster yellows witches'-broom phytoplasma (strain AYWB).